The chain runs to 842 residues: Histidine biosynthesis trifunctional protein (842 aa).

A phosphoribosyl-AMP cyclohydrolase region spans residues 1–275 (MTFPLLPAYA…FVVEQTGVGF (275 aa)). Residues 276–357 (CHLERTSCFG…FYFALVRCAK (82 aa)) form a phosphoribosyl-ATP pyrophosphohydrolase region. The tract at residues 358–842 (YGVTLDEVER…KVRMEKLGLI (485 aa)) is histidinol dehydrogenase. A disordered region spans residues 380-403 (KGDAKPGYTKEQPKEESKPKEVPS). Residues 390-403 (EQPKEESKPKEVPS) are compositionally biased toward basic and acidic residues. Zn(2+) is bound by residues glutamine 667 and histidine 670. Active-site residues include glutamate 736 and histidine 737. Zn(2+)-binding residues include aspartate 769 and histidine 828.

The protein in the C-terminal section; belongs to the histidinol dehydrogenase family. Zn(2+) is required as a cofactor.

It carries out the reaction 1-(5-phospho-beta-D-ribosyl)-5'-AMP + H2O = 1-(5-phospho-beta-D-ribosyl)-5-[(5-phospho-beta-D-ribosylamino)methylideneamino]imidazole-4-carboxamide. The enzyme catalyses 1-(5-phospho-beta-D-ribosyl)-ATP + H2O = 1-(5-phospho-beta-D-ribosyl)-5'-AMP + diphosphate + H(+). It catalyses the reaction L-histidinol + 2 NAD(+) + H2O = L-histidine + 2 NADH + 3 H(+). The protein operates within amino-acid biosynthesis; L-histidine biosynthesis; L-histidine from 5-phospho-alpha-D-ribose 1-diphosphate: step 2/9. It functions in the pathway amino-acid biosynthesis; L-histidine biosynthesis; L-histidine from 5-phospho-alpha-D-ribose 1-diphosphate: step 3/9. It participates in amino-acid biosynthesis; L-histidine biosynthesis; L-histidine from 5-phospho-alpha-D-ribose 1-diphosphate: step 9/9. This is Histidine biosynthesis trifunctional protein (HIS4) from Komagataella pastoris (Yeast).